Consider the following 113-residue polypeptide: U11-theraphotoxin-Hhn1u (113 aa).

The first 21 residues, 1 to 21 (MNTVRVTFLLVFVLAVSLGQA), serve as a signal peptide directing secretion. Residues 22–74 (DKDENRMEMQEKTEQGKSYLDFAENLLLQKLEELEAKLLEEDSEESRNSRQKR) constitute a propeptide that is removed on maturation. 3 disulfide bridges follow: Cys-75–Cys-90, Cys-82–Cys-95, and Cys-89–Cys-110.

It belongs to the neurotoxin 14 (magi-1) family. 01 (HNTX-16) subfamily. In terms of tissue distribution, expressed by the venom gland.

It is found in the secreted. Functionally, probable ion channel inhibitor. The chain is U11-theraphotoxin-Hhn1u from Cyriopagopus hainanus (Chinese bird spider).